The chain runs to 253 residues: ER membrane protein complex subunit 3 (253 aa).

Transmembrane regions (helical) follow at residues 10 to 30, 126 to 146, and 176 to 196; these read WVLLPISIVMVLTGVLKQYIM, FIPQTIIMWWVNHFFAGFILM, and SISWYFISVLGLNPVYNLIGL.

This sequence belongs to the EMC3 family. As to quaternary structure, component of the ER membrane protein complex (EMC), which is composed of EMC1, EMC2, EMC3, EMC4, EMC5 and EMC6.

Its subcellular location is the endoplasmic reticulum membrane. The EMC seems to be required for efficient folding of proteins in the endoplasmic reticulum (ER). This Saccharomyces cerevisiae (strain YJM789) (Baker's yeast) protein is ER membrane protein complex subunit 3 (AIM27).